A 784-amino-acid polypeptide reads, in one-letter code: MYPSTLPAEADPSTMNGSSVAEPPDFQAATAAAAAAARASSLEQDEWSVGECGFLDPDVQRTMRSGSAAEDITQYPMHGWVDVTKEFHDACAELQPGELAQDMLFGLFEAMSAIEIMDPKMDVGMGFDKQDLPPPSFEAAIATGAIKLDDLTPSELIGIYDALFSCLVSWLEGNSMDQVLFTCLYLHAPAQIKDKALRVFCTAVRNLIVVIKKIIAVAAVNEEEDFQLYGNSALLAAEKAQPATVYSSLKDVEDELIRKCKKLTSTEDWMAVVHRLRFMRHLFQVIYHVEQMASNDTVDDKVDIYKILLVASEMLPGIRNTLDRGTQPEKGSDAPNPMGFSPRIHDRSQPPAFPRSIKIRDRPSSYQFLEEMISRFKYACKVTKYKDYYSALNFFIEYSKKSGQCILSRSVLQTLFSANMRMAHGKLPMKQFLRHSVQVFNSPPVLNAKHPVAADPKVQQHLENFFRYCINMNTFTQFIRICGFNRARQRDKLARLIENFDTIQVDAARLDSMMNQLANERAMEGNEPMATALKHSTHFSTWVLYNCFRAMLIFLMSGFELELYAVHEFLYIYWYPYEFLIGFLVSALTRTENILLAQEEYAEHQSKTQSGGSGAAKNRKAAKPKKNKKTQRPYRAEIVFYHALLSLCGGMYKAMGALTKDGRVRLPLSKFDNEEIRYNRRFLPFATLTSPPPVSYAEFKNVREHMMRHSVEDLYTYAAKHFDQARNVLESIQNPDQEMLDLLQIARTNFVVMNVLARGHQKEVKRQPEFDFSKHSYFPIIKLK.

Disordered stretches follow at residues 1–23 (MYPS…VAEP), 320–353 (NTLD…PPAF), and 606–630 (SKTQ…NKKT). Positions 617-630 (KNRKAAKPKKNKKT) are enriched in basic residues.

It belongs to the MAK10 family. In terms of assembly, component of the N-terminal acetyltransferase C (NatC) complex, which is composed of Naa35, Sbat/Naa38 and Naa30A.

The protein localises to the cytoplasm. Functionally, auxillary component of the N-terminal acetyltransferase C (NatC) complex which catalyzes acetylation of N-terminal methionine residues. The polypeptide is N-alpha-acetyltransferase 35, NatC auxiliary subunit homolog (Drosophila melanogaster (Fruit fly)).